Here is a 188-residue protein sequence, read N- to C-terminus: CASP-like protein 4B1 (188 aa).

The segment at 1–34 (MTNPDNMKPVEATDVESAAEKTSEPTPASGTSTI) is disordered. Topologically, residues 1-46 (MTNPDNMKPVEATDVESAAEKTSEPTPASGTSTITQRWKREDLIKK) are cytoplasmic. Residues 24-34 (EPTPASGTSTI) show a composition bias toward polar residues. A helical transmembrane segment spans residues 47–67 (ASPITRGICLLFSLIAFLIMV). The Extracellular segment spans residues 68–84 (SNKHGYGRNFNDYEEYR). Residues 85–105 (YVLAISIISTLYTAWQTFAHF) traverse the membrane as a helical segment. Residues 106-124 (SKREIFDRRTSILVDFSGD) lie on the Cytoplasmic side of the membrane. A helical membrane pass occupies residues 125–145 (QIVAYLLISAASSAIPLTNIF). Residues 146–156 (REGQDNIFTDS) lie on the Extracellular side of the membrane. Residues 157-177 (AASAISMAIFAFIALALSALF) traverse the membrane as a helical segment. The Cytoplasmic portion of the chain corresponds to 178-188 (SGYKLSTHSFI).

The protein belongs to the Casparian strip membrane proteins (CASP) family. Homodimer and heterodimers.

It is found in the cell membrane. The protein is CASP-like protein 4B1 of Arabidopsis thaliana (Mouse-ear cress).